We begin with the raw amino-acid sequence, 151 residues long: Ribosome maturation factor RimP (151 aa).

This sequence belongs to the RimP family.

The protein resides in the cytoplasm. In terms of biological role, required for maturation of 30S ribosomal subunits. This is Ribosome maturation factor RimP from Thermoanaerobacter pseudethanolicus (strain ATCC 33223 / 39E) (Clostridium thermohydrosulfuricum).